The following is a 252-amino-acid chain: Geranylgeranylglyceryl phosphate synthase (252 aa).

The Mg(2+) site is built by Asp-25 and Ser-54. Residues Phe-174–Gly-180, Gly-205–Gly-206, and Gly-227–Asn-228 contribute to the sn-glycerol 1-phosphate site.

Belongs to the GGGP/HepGP synthase family. Group II subfamily. As to quaternary structure, homohexamer. Mg(2+) serves as cofactor.

It carries out the reaction sn-glycerol 1-phosphate + (2E,6E,10E)-geranylgeranyl diphosphate = sn-3-O-(geranylgeranyl)glycerol 1-phosphate + diphosphate. Its function is as follows. Prenyltransferase that catalyzes the transfer of the geranylgeranyl moiety of geranylgeranyl diphosphate (GGPP) to the C3 hydroxyl of sn-glycerol-1-phosphate (G1P). The protein is Geranylgeranylglyceryl phosphate synthase of Chitinophaga pinensis (strain ATCC 43595 / DSM 2588 / LMG 13176 / NBRC 15968 / NCIMB 11800 / UQM 2034).